Consider the following 102-residue polypeptide: Large ribosomal subunit protein bL21 (102 aa).

It belongs to the bacterial ribosomal protein bL21 family. In terms of assembly, part of the 50S ribosomal subunit. Contacts protein L20.

Its function is as follows. This protein binds to 23S rRNA in the presence of protein L20. The chain is Large ribosomal subunit protein bL21 from Oleidesulfovibrio alaskensis (strain ATCC BAA-1058 / DSM 17464 / G20) (Desulfovibrio alaskensis).